We begin with the raw amino-acid sequence, 745 residues long: Phosphoribosylformylglycinamidine synthase subunit PurL (745 aa).

The active site involves His-54. ATP-binding residues include Tyr-57 and Lys-96. Mg(2+) is bound at residue Glu-98. Substrate-binding positions include 99 to 102 (SHNH) and Arg-121. His-100 serves as the catalytic Proton acceptor. Asp-122 contributes to the Mg(2+) binding site. Gln-250 provides a ligand contact to substrate. Residue Asp-278 coordinates Mg(2+). Position 322–324 (322–324 (ESQ)) interacts with substrate. Asp-503 and Gly-540 together coordinate ATP. Position 541 (Asn-541) interacts with Mg(2+). Ser-543 serves as a coordination point for substrate.

It belongs to the FGAMS family. Monomer. Part of the FGAM synthase complex composed of 1 PurL, 1 PurQ and 2 PurS subunits.

The protein resides in the cytoplasm. It catalyses the reaction N(2)-formyl-N(1)-(5-phospho-beta-D-ribosyl)glycinamide + L-glutamine + ATP + H2O = 2-formamido-N(1)-(5-O-phospho-beta-D-ribosyl)acetamidine + L-glutamate + ADP + phosphate + H(+). Its pathway is purine metabolism; IMP biosynthesis via de novo pathway; 5-amino-1-(5-phospho-D-ribosyl)imidazole from N(2)-formyl-N(1)-(5-phospho-D-ribosyl)glycinamide: step 1/2. In terms of biological role, part of the phosphoribosylformylglycinamidine synthase complex involved in the purines biosynthetic pathway. Catalyzes the ATP-dependent conversion of formylglycinamide ribonucleotide (FGAR) and glutamine to yield formylglycinamidine ribonucleotide (FGAM) and glutamate. The FGAM synthase complex is composed of three subunits. PurQ produces an ammonia molecule by converting glutamine to glutamate. PurL transfers the ammonia molecule to FGAR to form FGAM in an ATP-dependent manner. PurS interacts with PurQ and PurL and is thought to assist in the transfer of the ammonia molecule from PurQ to PurL. The protein is Phosphoribosylformylglycinamidine synthase subunit PurL of Helicobacter hepaticus (strain ATCC 51449 / 3B1).